The following is a 60-amino-acid chain: Small ribosomal subunit protein bS21 (60 aa).

A disordered region spans residues 38 to 60 (KGVKRREKEKAARKRLQKKHRMY).

It belongs to the bacterial ribosomal protein bS21 family.

This is Small ribosomal subunit protein bS21 from Mycoplasmoides gallisepticum (strain R(low / passage 15 / clone 2)) (Mycoplasma gallisepticum).